The chain runs to 451 residues: LisH domain-containing protein C1711.05 (451 aa).

The LisH domain occupies 6–38 (MKSKVCPLIYHFLQENGYVKTAQTFLKETGDKD). Positions 59 to 394 (PYLTTEDVGK…VGDPSQWDFA (336 aa)) are disordered. The segment covering 73-98 (KESLEKSNDDSQKISKKGAPPEKAHS) has biased composition (basic and acidic residues). The segment covering 99-120 (SSEASGSGSSSDESDSSSSESE) has biased composition (low complexity). Acidic residues predominate over residues 135–145 (SESESSSEDSD). A compositionally biased stretch (low complexity) spans 146-174 (SSSSSSDSESESSSEGSDSSSSSSSSESE). A compositionally biased stretch (acidic residues) spans 189-199 (SESESSSEDSD). Residues 200–228 (SSSSSSDSESESSSEGSDSSSSSSSSESE) show a composition bias toward low complexity. 2 stretches are compositionally biased toward acidic residues: residues 243–253 (SESESSSEDSD) and 278–300 (DSED…EDSD). Residues 301 to 319 (STSSSSDSDSSSSSEDGNS) are compositionally biased toward low complexity. Over residues 320-332 (NTDTTTSGEVSAQ) the composition is skewed to polar residues. Positions 333 to 343 (SSTNSTSSEES) are enriched in low complexity. Residues 344-365 (TSVKDEDSSKIHDKSLKRKHED) are compositionally biased toward basic and acidic residues. Residues 369–380 (STSTKSSRTTKT) are compositionally biased toward low complexity.

It is found in the nucleus. The protein localises to the nucleolus. The sequence is that of LisH domain-containing protein C1711.05 from Schizosaccharomyces pombe (strain 972 / ATCC 24843) (Fission yeast).